The primary structure comprises 104 residues: Signal recognition particle 19 kDa protein (104 aa).

It belongs to the SRP19 family. Part of the signal recognition particle protein translocation system, which is composed of SRP and FtsY. Archaeal SRP consists of a 7S RNA molecule of 300 nucleotides and two protein subunits: SRP54 and SRP19.

It is found in the cytoplasm. In terms of biological role, involved in targeting and insertion of nascent membrane proteins into the cytoplasmic membrane. Binds directly to 7S RNA and mediates binding of the 54 kDa subunit of the SRP. The chain is Signal recognition particle 19 kDa protein from Archaeoglobus fulgidus (strain ATCC 49558 / DSM 4304 / JCM 9628 / NBRC 100126 / VC-16).